A 200-amino-acid polypeptide reads, in one-letter code: Dephospho-CoA kinase (200 aa).

In terms of domain architecture, DPCK spans 3–200 (RIGLTGGIGS…LIAEILTRIK (198 aa)). An ATP-binding site is contributed by 11 to 16 (GSGKST).

This sequence belongs to the CoaE family.

The protein localises to the cytoplasm. It carries out the reaction 3'-dephospho-CoA + ATP = ADP + CoA + H(+). It participates in cofactor biosynthesis; coenzyme A biosynthesis; CoA from (R)-pantothenate: step 5/5. Its function is as follows. Catalyzes the phosphorylation of the 3'-hydroxyl group of dephosphocoenzyme A to form coenzyme A. This Corynebacterium efficiens (strain DSM 44549 / YS-314 / AJ 12310 / JCM 11189 / NBRC 100395) protein is Dephospho-CoA kinase.